The chain runs to 548 residues: Folylpolyglutamate synthase (548 aa).

Position 130–133 (130–133 (GKGS)) interacts with ATP. Mg(2+) is bound by residues S157, E234, and H262. Residues R382 and D396 each coordinate ATP.

This sequence belongs to the folylpolyglutamate synthase family. The cofactor is a monovalent cation.

The protein localises to the mitochondrion inner membrane. It is found in the mitochondrion matrix. It localises to the cytoplasm. The enzyme catalyses (6S)-5,6,7,8-tetrahydrofolyl-(gamma-L-Glu)(n) + L-glutamate + ATP = (6S)-5,6,7,8-tetrahydrofolyl-(gamma-L-Glu)(n+1) + ADP + phosphate + H(+). It participates in cofactor biosynthesis; tetrahydrofolylpolyglutamate biosynthesis. Its function is as follows. Catalyzes conversion of folates to polyglutamate derivatives allowing concentration of folate compounds in the cell and the intracellular retention of these cofactors, which are important substrates for most of the folate-dependent enzymes that are involved in one-carbon transfer reactions involved in purine, pyrimidine and amino acid synthesis. Required for methionine synthesis and maintenance of intact mitochondrial DNA. Involved in telomere maintenance. This is Folylpolyglutamate synthase from Saccharomyces cerevisiae (strain AWRI796) (Baker's yeast).